Here is a 415-residue protein sequence, read N- to C-terminus: Hepatocyte nuclear factor 3-beta (415 aa).

Residues 150-244 (KPPYSYISLI…ENGCYLRRQK (95 aa)) constitute a DNA-binding region (fork-head). Positions 251–262 (KMSMKEPGRKGG) are enriched in basic and acidic residues. Positions 251 to 324 (KMSMKEPGRK…GQHLMSQHHS (74 aa)) are disordered. The span at 266–277 (SANSSSDSCNGN) shows a compositional bias: low complexity. The segment covering 310–323 (SPVSQGQHLMSQHH) has biased composition (polar residues).

Its subcellular location is the nucleus. Its function is as follows. Transcription activator for a number of liver genes. Interacts with the cis-acting regulatory regions of these genes. This is Hepatocyte nuclear factor 3-beta (foxa2) from Oryzias latipes (Japanese rice fish).